Consider the following 604-residue polypeptide: Prostaglandin G/H synthase 2 (604 aa).

The first 17 residues, 1 to 17 (MLARALLLCAALALGQA), serve as a signal peptide directing secretion. The region spanning 18-55 (ANPCCSNPCQNRGECLSVGFDRYKCDCTRTGYYGENCT) is the EGF-like domain. 4 disulfide bridges follow: cysteine 21/cysteine 32, cysteine 22/cysteine 145, cysteine 26/cysteine 42, and cysteine 44/cysteine 54. Asparagine 53 carries an N-linked (GlcNAc...) asparagine glycan. Substrate is bound at residue arginine 106. A glycan (N-linked (GlcNAc...) asparagine) is linked at asparagine 130. The active-site Proton acceptor is histidine 193. Residue tyrosine 341 participates in substrate binding. Tyrosine 371 functions as the For cyclooxygenase activity in the catalytic mechanism. Histidine 374 provides a ligand contact to heme b. N-linked (GlcNAc...) asparagine glycosylation is present at asparagine 396. Residue cysteine 526 is modified to S-nitrosocysteine. Cysteine 555 and cysteine 561 are joined by a disulfide. A glycan (N-linked (GlcNAc...) asparagine) is linked at asparagine 580.

It belongs to the prostaglandin G/H synthase family. Homodimer. Requires heme b as cofactor. S-nitrosylation by NOS2 (iNOS) activates enzyme activity. S-nitrosylation may take place on different Cys residues in addition to Cys-526.

It is found in the microsome membrane. The protein localises to the endoplasmic reticulum membrane. Its subcellular location is the nucleus inner membrane. It localises to the nucleus outer membrane. It carries out the reaction (5Z,8Z,11Z,14Z)-eicosatetraenoate + AH2 + 2 O2 = prostaglandin H2 + A + H2O. The catalysed reaction is (5Z,8Z,11Z,14Z)-eicosatetraenoate + 2 O2 = prostaglandin G2. It catalyses the reaction prostaglandin G2 + AH2 = prostaglandin H2 + A + H2O. The enzyme catalyses (5Z,8Z,11Z,14Z,17Z)-eicosapentaenoate + 2 O2 = prostaglandin G3. It carries out the reaction prostaglandin G3 + AH2 = prostaglandin H3 + A + H2O. The catalysed reaction is (8Z,11Z,14Z)-eicosatrienoate + 2 O2 = prostaglandin G1. It catalyses the reaction prostaglandin G1 + AH2 = prostaglandin H1 + A + H2O. The enzyme catalyses 2-(5Z,8Z,11Z,14Z)-eicosatetraenoyl-sn-glycero-3-phosphoethanolamine + 2 O2 = 2-(prostaglandin G2)-sn-glycero-3-phosphoethanolamine. It carries out the reaction 2-(prostaglandin G2)-sn-glycero-3-phosphoethanolamine + AH2 = 2-(prostaglandin H2)-sn-glycero-3-phosphoethanolamine + A + H2O. The catalysed reaction is 2-(5Z,8Z,11Z,14Z)-eicosatetraenoyl-sn-glycero-3-phosphocholine + 2 O2 = 2-(prostaglandin G2)-sn-glycero-3-phosphocholine. It catalyses the reaction 2-(prostaglandin G2)-sn-glycero-3-phosphocholine + AH2 = 2-(prostaglandin H2)-sn-glycero-3-phosphocholine + A + H2O. The enzyme catalyses (15S)-hydroperoxy-(5Z,8Z,11Z,13E)-eicosatetraenoate + AH2 = (15S)-hydroxy-(5Z,8Z,11Z,13E)-eicosatetraenoate + A + H2O. It carries out the reaction 2-(5Z,8Z,11Z,14Z)-eicosatetraenoyl-sn-glycero-3-phosphocholine + AH2 + O2 = 2-[(15S)-hydroxy-(5Z,8Z,11Z,13E)-eicosatetraenoyl]-sn-glycero-3-phosphocholine + A + H2O. The catalysed reaction is 2-(5Z,8Z,11Z,14Z)-eicosatetraenoyl-sn-glycero-3-phosphocholine + AH2 + O2 = 2-[(15R)-hydroxy-(5Z,8Z,11Z,13E)-eicosatetraenoyl]-sn-glycero-3-phosphocholine + A + H2O. It catalyses the reaction 2-(5Z,8Z,11Z,14Z)-eicosatetraenoyl-sn-glycero-3-phosphocholine + AH2 + O2 = 2-[(11R)-hydroxy-(5Z,8Z,12E,14Z)-eicosatetraenoyl]-sn-glycero-3-phosphocholine + A + H2O. The enzyme catalyses (9Z,12Z)-octadecadienoate + AH2 + O2 = 9-hydroxy-(10E,12Z)-octadecadienoate + A + H2O. It carries out the reaction (9Z,12Z)-octadecadienoate + AH2 + O2 = 13-hydroxy-(9Z,11E)-octadecadienoate + A + H2O. The catalysed reaction is (5Z,8Z,11Z,14Z)-eicosatetraenoate + AH2 + O2 = (15R)-hydroxy-(5Z,8Z,11Z,13E)-eicosatetraenoate + A + H2O. It catalyses the reaction (5Z,8Z,11Z,14Z)-eicosatetraenoate + AH2 + O2 = (11R)-hydroxy-(5Z,8Z,12E,14Z)-eicosatetraenoate + A + H2O. The enzyme catalyses (5Z,8Z,11Z,14Z,17Z)-eicosapentaenoate + AH2 + O2 = (11R)-hydroxy-(5Z,8Z,12E,14Z,17Z)-eicosapentaenoate + A + H2O. It carries out the reaction (5Z,8Z,11Z,14Z,17Z)-eicosapentaenoate + AH2 + O2 = (18S)-hydroxy-(5Z,8Z,11Z,14Z,16E)-eicosapentaenoate + A + H2O. The catalysed reaction is (5Z,8Z,11Z,14Z,17Z)-eicosapentaenoate + AH2 + O2 = (18R)-hydroxy-(5Z,8Z,11Z,14Z,16E)-eicosapentaenoate + A + H2O. It catalyses the reaction (5Z,8Z,11Z,14Z,17Z)-eicosapentaenoate + AH2 + O2 = (15R)-hydroxy-(5Z,8Z,11Z,13E,17Z)-eicosapentaenoate + A + H2O. The enzyme catalyses (5Z,8Z,11Z,14Z,17Z)-eicosapentaenoate + AH2 + O2 = (15S)-hydroxy-(5Z,8Z,11Z,13E,17Z)-eicosapentaenoate + A + H2O. It carries out the reaction (7Z,10Z,13Z,16Z,19Z)-docosapentaenoate + AH2 + O2 = 13R-hydroxy-(7Z,10Z,14E,16Z,19Z)-docosapentaenoate + A + H2O. The catalysed reaction is (4Z,7Z,10Z,13Z,16Z,19Z)-docosahexaenoate + AH2 + O2 = 13-hydroxy-(4Z,7Z,10Z,14E,16Z,19Z)-docosahexaenoate + A + H2O. It catalyses the reaction (5S)-hydroxy-(6E,8Z,11Z,14Z)-eicosatetraenoate + AH2 + O2 = (5S,15R)-dihydroxy-(6E,8Z,11Z,13E)-eicosatetraenoate + A + H2O. The enzyme catalyses (4Z,7Z,10Z,13Z,16Z,19Z)-docosahexaenoate + AH2 + O2 = 17R-hydroxy-(4Z,7Z,10Z,13Z,15E,19Z)-docosahexaenoate + A + H2O. It carries out the reaction (5S)-hydroxy-(6E,8Z,11Z,14Z)-eicosatetraenoate + AH2 + O2 = (5S,15S)-dihydroxy-(6E,8Z,11Z,13E)-eicosatetraenoate + A + H2O. The catalysed reaction is (5S)-hydroxy-(6E,8Z,11Z,14Z)-eicosatetraenoate + AH2 + O2 = (5S,11R)-dihydroxy-(6E,8Z,12E,14Z)-eicosatetraenoate + A + H2O. It catalyses the reaction 2-(5Z,8Z,11Z,14Z-eicosatetraenoyl)-glycerol + 2 O2 = 2-glyceryl-prostaglandin G2. The enzyme catalyses 2-glyceryl-prostaglandin G2 + AH2 = 2-glyceryl-prostaglandin H2 + A + H2O. It carries out the reaction (5Z,8Z,11Z,14Z)-eicosatetraenoate + O2 = (15R)-hydroperoxy-(5Z,8Z,11Z,13E)-eicosatetraenoate. The catalysed reaction is (5Z,8Z,11Z,14Z)-eicosatetraenoate + O2 = 11R-hydroperoxy-(5Z,8Z,12E,14Z)-eicosatetraenoate. It catalyses the reaction (9Z,12Z)-octadecadienoate + AH2 + O2 = (9R)-hydroxy-(10E,12Z)-octadecadienoate + A + H2O. The enzyme catalyses (9Z,12Z)-octadecadienoate + AH2 + O2 = (9S)-hydroxy-(10E,12Z)-octadecadienoate + A + H2O. It carries out the reaction (9Z,12Z)-octadecadienoate + AH2 + O2 = (13S)-hydroxy-(9Z,11E)-octadecadienoate + A + H2O. The catalysed reaction is (9Z,12Z)-octadecadienoate + AH2 + O2 = (13R)-hydroxy-(9Z,11E)-octadecadienoate + A + H2O. It functions in the pathway lipid metabolism; prostaglandin biosynthesis. Functionally, dual cyclooxygenase and peroxidase in the biosynthesis pathway of prostanoids, a class of C20 oxylipins mainly derived from arachidonate ((5Z,8Z,11Z,14Z)-eicosatetraenoate, AA, C20:4(n-6)), with a particular role in the inflammatory response. The cyclooxygenase activity oxygenates AA to the hydroperoxy endoperoxide prostaglandin G2 (PGG2), and the peroxidase activity reduces PGG2 to the hydroxy endoperoxide prostaglandin H2 (PGH2), the precursor of all 2-series prostaglandins and thromboxanes. This complex transformation is initiated by abstraction of hydrogen at carbon 13 (with S-stereochemistry), followed by insertion of molecular O2 to form the endoperoxide bridge between carbon 9 and 11 that defines prostaglandins. The insertion of a second molecule of O2 (bis-oxygenase activity) yields a hydroperoxy group in PGG2 that is then reduced to PGH2 by two electrons. Similarly catalyzes successive cyclooxygenation and peroxidation of dihomo-gamma-linoleate (DGLA, C20:3(n-6)) and eicosapentaenoate (EPA, C20:5(n-3)) to corresponding PGH1 and PGH3, the precursors of 1- and 3-series prostaglandins. In an alternative pathway of prostanoid biosynthesis, converts 2-arachidonoyl lysophopholipids to prostanoid lysophopholipids, which are then hydrolyzed by intracellular phospholipases to release free prostanoids. Metabolizes 2-arachidonoyl glycerol yielding the glyceryl ester of PGH2, a process that can contribute to pain response. Generates lipid mediators from n-3 and n-6 polyunsaturated fatty acids (PUFAs) via a lipoxygenase-type mechanism. Oxygenates PUFAs to hydroperoxy compounds and then reduces them to corresponding alcohols. Plays a role in the generation of resolution phase interaction products (resolvins) during both sterile and infectious inflammation. Metabolizes docosahexaenoate (DHA, C22:6(n-3)) to 17R-HDHA, a precursor of the D-series resolvins (RvDs). As a component of the biosynthetic pathway of E-series resolvins (RvEs), converts eicosapentaenoate (EPA, C20:5(n-3)) primarily to 18S-HEPE that is further metabolized by ALOX5 and LTA4H to generate 18S-RvE1 and 18S-RvE2. In vascular endothelial cells, converts docosapentaenoate (DPA, C22:5(n-3)) to 13R-HDPA, a precursor for 13-series resolvins (RvTs) shown to activate macrophage phagocytosis during bacterial infection. In activated leukocytes, contributes to oxygenation of hydroxyeicosatetraenoates (HETE) to diHETES (5,15-diHETE and 5,11-diHETE). Can also use linoleate (LA, (9Z,12Z)-octadecadienoate, C18:2(n-6)) as substrate and produce hydroxyoctadecadienoates (HODEs) in a regio- and stereospecific manner, being (9R)-HODE ((9R)-hydroxy-(10E,12Z)-octadecadienoate) and (13S)-HODE ((13S)-hydroxy-(9Z,11E)-octadecadienoate) its major products. During neuroinflammation, plays a role in neuronal secretion of specialized preresolving mediators (SPMs) 15R-lipoxin A4 that regulates phagocytic microglia. This chain is Prostaglandin G/H synthase 2 (PTGS2), found in Cavia porcellus (Guinea pig).